The following is a 238-amino-acid chain: Ribonuclease 3 (238 aa).

One can recognise an RNase III domain in the interval 17-140 (YATLEKALGY…LMAGVYLEAG (124 aa)). E53 is a binding site for Mg(2+). D57 is a catalytic residue. S126 and E129 together coordinate Mg(2+). The active site involves E129. A DRBM domain is found at 167–236 (DYKTALQELT…AYQALQKLKE (70 aa)).

This sequence belongs to the ribonuclease III family. In terms of assembly, homodimer. Requires Mg(2+) as cofactor.

The protein resides in the cytoplasm. It catalyses the reaction Endonucleolytic cleavage to 5'-phosphomonoester.. In terms of biological role, digests double-stranded RNA. Involved in the processing of primary rRNA transcript to yield the immediate precursors to the large and small rRNAs (23S and 16S). Processes some mRNAs, and tRNAs when they are encoded in the rRNA operon. Processes pre-crRNA and tracrRNA of type II CRISPR loci if present in the organism. This Helicobacter pylori (strain Shi470) protein is Ribonuclease 3.